Here is a 1276-residue protein sequence, read N- to C-terminus: Sterol regulatory element-binding protein cleavage-activating protein (1276 aa).

Residues 1–18 (MTLTERLREKISQAFYNH) lie on the Cytoplasmic side of the membrane. A helical transmembrane segment spans residues 19–39 (GLLCASYPIPIILFTGLCILA). At 40 to 279 (CCYPLLKLPL…NLVHVHFKEE (240 aa)) the chain is on the lumenal side. The segment at 46–284 (KLPLPGTGPV…HFKEEIGIAE (239 aa)) is loop-1. The tract at residues 60–81 (PVKGYSPPPADSDHKQGEPSEQ) is disordered. An N-linked (GlcNAc...) asparagine glycan is attached at N263. The chain crosses the membrane as a helical span at residues 280–300 (IGIAELIPLVTTYIILFAYIY). Residues 284-442 (ELIPLVTTYI…MLFFTTVLSI (159 aa)) form the SSD domain. Topologically, residues 301–312 (FSTRKIDMVKSK) are cytoplasmic. The helical transmembrane segment at 313–333 (WGLALAAVVTVLSSLLMSVGL) threads the bilayer. Residues 334-344 (CTLFGLTPTLN) are Lumenal-facing. Residues 345–365 (GGEIFPYLVVVIGLENVLVLT) traverse the membrane as a helical segment. Residues 366–401 (KSVVSTPVDLEVKLRIAQGLSSESWSIMKNVATELG) lie on the Cytoplasmic side of the membrane. A helical transmembrane segment spans residues 402–422 (IILIGYFTLVPAIQEFCLFAV). A topological domain (lumenal) is located at residue V423. The helical transmembrane segment at 424–444 (GLVSDFFLQMLFFTTVLSIDI) threads the bilayer. Residues 445-518 (RRMELADLNK…FLARTRLAQR (74 aa)) are Cytoplasmic-facing. The ER export signal signature appears at 447–452 (MELADL). Residues K454 and K466 each participate in a glycyl lysine isopeptide (Lys-Gly) (interchain with G-Cter in ubiquitin) cross-link. Residues 519-539 (LIMAGTVVWIGILVYTDPAGL) form a helical membrane-spanning segment. A loop-7 region spans residues 535-710 (DPAGLRTYLA…QTHGDITLYK (176 aa)). Residues 540-707 (RTYLAAQVTE…GGTQTHGDIT (168 aa)) are Lumenal-facing. Residues N590 and N641 are each glycosylated (N-linked (GlcNAc...) asparagine). Residues 708-728 (LYKVAALGLAAGIVLVLLLLC) form a helical membrane-spanning segment. Over 729 to 1276 (LYRVLCPRNY…YVPSVLEKLD (548 aa)) the chain is Cytoplasmic. Residues 731 to 1276 (RVLCPRNYGQ…YVPSVLEKLD (546 aa)) form an interaction with SREBF2 region. The WD 1 repeat unit spans residues 771–811 (VLRGHLMDIECLASDGMLLVSCCLAGQVCVWDAQTGDCLTR). S821, S837, S843, S850, S905, and S934 each carry phosphoserine. A disordered region spans residues 834-903 (ERLSDGGKAS…RHRAGCGRSR (70 aa)). Residues 928-958 (SALRPPSPGPPLPQASQEEGTAPEKGSPPLA) are disordered. WD repeat units follow at residues 949-999 (APEK…LCCS) and 1002-1039 (EISS…SLSP). The residue at position 1048 (R1048) is an Omega-N-methylarginine. 4 WD repeats span residues 1074–1111 (AHQK…CLFT), 1114–1152 (GHSG…RVSH), 1155–1192 (AHRG…KLYS), and 1194–1232 (QQDL…LLQT).

This sequence belongs to the WD repeat SCAP family. Membrane region forms a homotetramer. Component of the SCAP-SREBP complex (composed of SCAP and SREBF1/SREBP1 or SREBF2/SREBP2); interacts with SREBF1/SREBP1 or SREBF2/SREBP2 through its C-terminal cytoplasmic domain. Forms a ternary complex with INSIG1 or INSIG2 through its transmembrane domains at high sterol concentrations. Interacts with PAQR3; the interaction anchors the SCAP-SREBP complex to the Golgi apparatus in low cholesterol conditions. Interacts with the SEC23-SEC24 complex in a SAR1-GTP-dependent manner through an ER export signal in its third cytoplasmic loop. Interacts with RNF139; the interaction inhibits the interaction of SCAP with SEC24B and hampering the ER to Golgi transport of the SCAP-SREBP complex. Interacts with SPRING1. In terms of processing, ubiquitinated at Lys-454 and Lys-466. RNF145 triggers ubiquitination of SCAP, likely inhibiting SCAP-SREBP complex transport to the Golgi apparatus and the subsequent processing/maturation of SREBF2/SREBP2.

The protein resides in the endoplasmic reticulum membrane. It is found in the golgi apparatus membrane. The protein localises to the cytoplasmic vesicle. Its subcellular location is the COPII-coated vesicle membrane. Escort protein required for cholesterol as well as lipid homeostasis. Regulates export of the SCAP-SREBP complex from the endoplasmic reticulum to the Golgi upon low cholesterol, thereby regulating the processing of sterol regulatory element-binding proteins (SREBPs) SREBF1/SREBP1 and SREBF2/SREBP2. At high sterol concentrations, formation of a ternary complex with INSIG (INSIG1 or INSIG2) leads to mask the ER export signal in SCAP, promoting retention of the complex in the endoplasmic reticulum. Low sterol concentrations trigger release of INSIG, a conformational change in the SSD domain of SCAP, unmasking of the ER export signal, promoting recruitment into COPII-coated vesicles and transport of the SCAP-SREBP to the Golgi: in the Golgi, SREBPs are then processed, releasing the transcription factor fragment of SREBPs from the membrane, its import into the nucleus and up-regulation of LDLR, INSIG1 and the mevalonate pathway. Binds cholesterol via its SSD domain. The protein is Sterol regulatory element-binding protein cleavage-activating protein of Rattus norvegicus (Rat).